The sequence spans 82 residues: Small ribosomal subunit protein bS16 (82 aa).

This sequence belongs to the bacterial ribosomal protein bS16 family.

In Dehalococcoides mccartyi (strain ATCC BAA-2266 / KCTC 15142 / 195) (Dehalococcoides ethenogenes (strain 195)), this protein is Small ribosomal subunit protein bS16.